The primary structure comprises 245 residues: Probable 2-phosphosulfolactate phosphatase (245 aa).

The protein belongs to the ComB family. Mg(2+) is required as a cofactor.

The catalysed reaction is (2R)-O-phospho-3-sulfolactate + H2O = (2R)-3-sulfolactate + phosphate. This is Probable 2-phosphosulfolactate phosphatase from Synechococcus sp. (strain RCC307).